Reading from the N-terminus, the 132-residue chain is Agouti-signaling protein (132 aa).

The first 22 residues, 1 to 22 (MDVTRLLLATLLVFLCFFTAYS), serve as a signal peptide directing secretion. Asn-39 carries an N-linked (GlcNAc...) asparagine glycan. Positions 57-88 (KKSKQTSRKEAEKKRSSKKEASMKKVARPRTP) are disordered. Over residues 63-79 (SRKEAEKKRSSKKEASM) the composition is skewed to basic and acidic residues. 5 cysteine pairs are disulfide-bonded: Cys-93-Cys-108, Cys-100-Cys-114, Cys-107-Cys-125, Cys-111-Cys-132, and Cys-116-Cys-123. In terms of domain architecture, Agouti spans 93–132 (CVATRDSCKPPAPACCDPCASCQCRFFRSACSCRVLSLNC).

It is found in the secreted. Functionally, involved in the regulation of melanogenesis. The binding of ASP to MC1R precludes alpha-MSH initiated signaling and thus blocks production of cAMP, leading to a down-regulation of eumelanogenesis (brown/black pigment) and thus increasing synthesis of pheomelanin (yellow/red pigment). This Macaca assamensis (Assam macaque) protein is Agouti-signaling protein (ASIP).